Consider the following 224-residue polypeptide: Urease accessory protein UreF (224 aa).

This sequence belongs to the UreF family. UreD, UreF and UreG form a complex that acts as a GTP-hydrolysis-dependent molecular chaperone, activating the urease apoprotein by helping to assemble the nickel containing metallocenter of UreC. The UreE protein probably delivers the nickel.

The protein resides in the cytoplasm. Functionally, required for maturation of urease via the functional incorporation of the urease nickel metallocenter. In Pseudomonas putida (strain W619), this protein is Urease accessory protein UreF.